The sequence spans 148 residues: Deoxyuridine 5'-triphosphate nucleotidohydrolase (148 aa).

Substrate-binding positions include 65-67 (RSG), asparagine 78, 82-84 (TID), and lysine 92.

This sequence belongs to the dUTPase family. Mg(2+) is required as a cofactor.

It catalyses the reaction dUTP + H2O = dUMP + diphosphate + H(+). Its pathway is pyrimidine metabolism; dUMP biosynthesis; dUMP from dCTP (dUTP route): step 2/2. Functionally, this enzyme is involved in nucleotide metabolism: it produces dUMP, the immediate precursor of thymidine nucleotides and it decreases the intracellular concentration of dUTP so that uracil cannot be incorporated into DNA. In Chlorobium phaeovibrioides (strain DSM 265 / 1930) (Prosthecochloris vibrioformis (strain DSM 265)), this protein is Deoxyuridine 5'-triphosphate nucleotidohydrolase.